Reading from the N-terminus, the 708-residue chain is MTKDLNTLVSELPEIYQTIFGHPEWDGDAARDCNQRLDLITEQYDNLSRALGRPLNVLDLGCAQGFFSLSLASKGATIVGIDFQQENINVCRALAEENPDFAAEFRVGRIEEVIAALEEGEFDLAIGLSVFHHIVHLHGIDEVKRLLSRLADVTQAVILELAVKEEPLYWGVSQPDDPRELIEQCAFYRLIGEFDTHLSPVPRPMYLVSNHRVLINDFNQPFQHWQNQPYAGAGLAHKRSRRYFFGEDYVCKFFYYDMPHGILTAEESQRNKHELHNEIKFLTQPPAGFDAPAVLAHGENAQSGWLVMEKLPGRLLSDMLAAGEEIDREKILGSLLRSLAALEKQGFWHDDVRPWNVMVDARQHARLIDFGSIVTTPQDCSWPTNLVQSFFVFVNELFAENKSWNGFWRSAPVHPFNLPQPWSNWLYAVWQEPVERWNFALLLALFEKKAKLPSAEQQRGATEQWIIAQETVLLELQSRGRNESAGSEALRGQIHTLEQQMAQLQSAQDAFVEKAQQPVEVSHELTWLGENMEQLAALLQTAQAHAQADVQPELPPETAELLQRLEAANREIHHLSNENQQLRQEIEKIHRSRSWRMTKGYRYLGLQIHLLRQYGFVQRCKHFIKRVLRFVFSFMRKHPQVKHTAVNGLHKLGLYQPAYRLYRRMNPLPHSQYQADAQILSQTELQVMHPELLPPEVYEIYLKLTKNK.

Positions 1 to 210 (MTKDLNTLVS…VPRPMYLVSN (210 aa)) are methyltransferase. Residues 16–17 (YQ), Arg-36, Gly-61, 82–87 (DFQQEN), 108–111 (GRIE), and Leu-128 each bind S-adenosyl-L-methionine. The segment at 211-459 (HRVLINDFNQ…AKLPSAEQQR (249 aa)) is kinase. Residues Pro-229, His-237, 241 to 243 (RRY), Lys-252, Glu-274, 309 to 311 (EKL), Met-358, and Asp-369 contribute to the ATP site. Residues 485 to 594 (AGSEALRGQI…EIEKIHRSRS (110 aa)) adopt a coiled-coil conformation. A required for membrane-binding region spans residues 601–669 (YRYLGLQIHL…RLYRRMNPLP (69 aa)). The required for localizing WbdA to the membrane stretch occupies residues 687-708 (VMHPELLPPEVYEIYLKLTKNK).

This sequence belongs to the WbdD family. Interacts with WbdA.

The protein resides in the cell inner membrane. The catalysed reaction is 3-O-phospho-alpha-D-Man-(1-&gt;2)-alpha-D-Man-(1-&gt;2)-[alpha-D-Man-(1-&gt;3)-alpha-D-Man-(1-&gt;3)-alpha-D-Man-(1-&gt;2)-alpha-D-Man-(1-&gt;2)](n)-alpha-D-Man-(1-&gt;3)-alpha-D-Man-(1-&gt;3)-alpha-D-Man-(1-&gt;3)-alpha-D-GlcNAc-di-trans,octa-cis-undecaprenyl diphosphate + S-adenosyl-L-methionine = 3-O-methylphospho-alpha-D-Man-(1-&gt;2)-alpha-D-Man-(1-&gt;2)-[alpha-D-Man-(1-&gt;3)-alpha-D-Man-(1-&gt;3)-alpha-D-Man-(1-&gt;2)-alpha-D-Man-(1-&gt;2)](n)-alpha-D-Man-(1-&gt;3)-alpha-D-Man-(1-&gt;3)-alpha-D-Man-(1-&gt;3)-alpha-D-GlcNAc-di-trans,octa-cis-undecaprenyl diphosphate + S-adenosyl-L-homocysteine. It carries out the reaction alpha-D-Man-(1-&gt;2)-alpha-D-Man-(1-&gt;2)-[alpha-D-Man-(1-&gt;3)-alpha-D-Man-(1-&gt;3)-alpha-D-Man-(1-&gt;2)-alpha-D-Man-(1-&gt;2)](n)-alpha-D-Man-(1-&gt;3)-alpha-D-Man-(1-&gt;3)-alpha-D-Man-(1-&gt;3)-alpha-D-GlcNAc-di-trans,octa-cis-undecaprenyl diphosphate + ATP = 3-O-phospho-alpha-D-Man-(1-&gt;2)-alpha-D-Man-(1-&gt;2)-[alpha-D-Man-(1-&gt;3)-alpha-D-Man-(1-&gt;3)-alpha-D-Man-(1-&gt;2)-alpha-D-Man-(1-&gt;2)](n)-alpha-D-Man-(1-&gt;3)-alpha-D-Man-(1-&gt;3)-alpha-D-Man-(1-&gt;3)-alpha-D-GlcNAc-di-trans,octa-cis-undecaprenyl diphosphate + ADP + H(+). Its pathway is bacterial outer membrane biogenesis; LPS O-antigen biosynthesis. In terms of biological role, regulates the length of the LPS O-antigen polysaccharide chain. Stops the polymerization of the chain by phosphorylating and then methylating the phosphate on the terminal sugar. This terminal modification is essential for export of the O-antigen across the inner membrane. WbdD is also required for correct localization of the WbdA mannosyltransferase. In Escherichia coli, this protein is O-antigen chain terminator bifunctional methyltransferase/kinase WbdD.